Consider the following 214-residue polypeptide: Cytochrome b (214 aa).

Transmembrane regions (helical) follow at residues 31–51 (FGSM…FLAI), 75–96 (WIMQ…YIHI), 111–131 (WLSG…GYVL), and 176–196 (FFAL…IHII). Heme b contacts are provided by H81 and H95. The heme b site is built by H180 and H194. H199 serves as a coordination point for a ubiquinone.

This sequence belongs to the cytochrome b family. In terms of assembly, the cytochrome bc1 complex contains 3 respiratory subunits (MT-CYB, CYC1 and UQCRFS1), 2 core proteins (UQCRC1 and UQCRC2) and probably 6 low-molecular weight proteins. Heme b is required as a cofactor.

It localises to the mitochondrion inner membrane. Functionally, component of the ubiquinol-cytochrome c reductase complex (complex III or cytochrome b-c1 complex) that is part of the mitochondrial respiratory chain. The b-c1 complex mediates electron transfer from ubiquinol to cytochrome c. Contributes to the generation of a proton gradient across the mitochondrial membrane that is then used for ATP synthesis. The chain is Cytochrome b (MT-CYB) from Atractaspis micropholis (Mole viper).